The sequence spans 193 residues: Ion-translocating oxidoreductase complex subunit A (193 aa).

6 helical membrane-spanning segments follow: residues 4-24 (LALI…KFLG), 38-58 (AMGM…CSYL), 65-85 (APLG…AVVV), 102-122 (VLGI…VALL), 134-154 (AVYG…FAAL), and 171-191 (SVAL…AGLV).

Belongs to the NqrDE/RnfAE family. In terms of assembly, the complex is composed of six subunits: RnfA, RnfB, RnfC, RnfD, RnfE and RnfG.

The protein localises to the cell inner membrane. Part of a membrane-bound complex that couples electron transfer with translocation of ions across the membrane. The polypeptide is Ion-translocating oxidoreductase complex subunit A (Alkalilimnicola ehrlichii (strain ATCC BAA-1101 / DSM 17681 / MLHE-1)).